A 123-amino-acid chain; its full sequence is ATP synthase epsilon chain (123 aa).

The protein belongs to the ATPase epsilon chain family. F-type ATPases have 2 components, CF(1) - the catalytic core - and CF(0) - the membrane proton channel. CF(1) has five subunits: alpha(3), beta(3), gamma(1), delta(1), epsilon(1). CF(0) has three main subunits: a, b and c.

The protein resides in the cell inner membrane. In terms of biological role, produces ATP from ADP in the presence of a proton gradient across the membrane. In Helicobacter pylori (strain HPAG1), this protein is ATP synthase epsilon chain.